Here is a 222-residue protein sequence, read N- to C-terminus: Sugar fermentation stimulation protein homolog (222 aa).

The protein belongs to the SfsA family.

The sequence is that of Sugar fermentation stimulation protein homolog from Thermotoga sp. (strain RQ2).